The following is a 629-amino-acid chain: tRNA uridine 5-carboxymethylaminomethyl modification enzyme MnmG (629 aa).

FAD-binding positions include 13-18, Val125, and Ser180; that span reads GGGHAG. NAD(+) is bound at residue 273-287; the sequence is GPRYCPSIEDKVMRF. An FAD-binding site is contributed by Gln370.

Belongs to the MnmG family. As to quaternary structure, homodimer. Heterotetramer of two MnmE and two MnmG subunits. The cofactor is FAD.

The protein resides in the cytoplasm. NAD-binding protein involved in the addition of a carboxymethylaminomethyl (cmnm) group at the wobble position (U34) of certain tRNAs, forming tRNA-cmnm(5)s(2)U34. This chain is tRNA uridine 5-carboxymethylaminomethyl modification enzyme MnmG, found in Photobacterium profundum (strain SS9).